Consider the following 272-residue polypeptide: Shikimate dehydrogenase (NADP(+)) (272 aa).

Shikimate is bound by residues 14 to 16 (SLS) and T61. K65 (proton acceptor) is an active-site residue. D102 contributes to the shikimate binding site. Residues 127–131 (GAGGA), 151–156 (NRTPSK), and L215 each bind NADP(+). Y217 is a shikimate binding site. G239 is a binding site for NADP(+).

It belongs to the shikimate dehydrogenase family. In terms of assembly, homodimer.

The enzyme catalyses shikimate + NADP(+) = 3-dehydroshikimate + NADPH + H(+). The protein operates within metabolic intermediate biosynthesis; chorismate biosynthesis; chorismate from D-erythrose 4-phosphate and phosphoenolpyruvate: step 4/7. Involved in the biosynthesis of the chorismate, which leads to the biosynthesis of aromatic amino acids. Catalyzes the reversible NADPH linked reduction of 3-dehydroshikimate (DHSA) to yield shikimate (SA). The chain is Shikimate dehydrogenase (NADP(+)) from Coxiella burnetii (strain Dugway 5J108-111).